A 54-amino-acid polypeptide reads, in one-letter code: Large ribosomal subunit protein bL32c (54 aa).

It belongs to the bacterial ribosomal protein bL32 family.

It localises to the plastid. Its subcellular location is the chloroplast. The sequence is that of Large ribosomal subunit protein bL32c from Panax ginseng (Korean ginseng).